The chain runs to 465 residues: Cysteine--tRNA ligase (465 aa).

Position 30 (Cys-30) interacts with Zn(2+). The short motif at 32–42 is the 'HIGH' region element; that stretch reads ITVYDYCHVGH. Positions 214, 239, and 243 each coordinate Zn(2+). The 'KMSKS' region motif lies at 271-275; sequence KMSKS. Lys-274 contributes to the ATP binding site.

It belongs to the class-I aminoacyl-tRNA synthetase family. Monomer. Requires Zn(2+) as cofactor.

Its subcellular location is the cytoplasm. It carries out the reaction tRNA(Cys) + L-cysteine + ATP = L-cysteinyl-tRNA(Cys) + AMP + diphosphate. This Burkholderia vietnamiensis (strain G4 / LMG 22486) (Burkholderia cepacia (strain R1808)) protein is Cysteine--tRNA ligase.